A 148-amino-acid polypeptide reads, in one-letter code: SsrA-binding protein (148 aa).

It belongs to the SmpB family.

The protein localises to the cytoplasm. Functionally, required for rescue of stalled ribosomes mediated by trans-translation. Binds to transfer-messenger RNA (tmRNA), required for stable association of tmRNA with ribosomes. tmRNA and SmpB together mimic tRNA shape, replacing the anticodon stem-loop with SmpB. tmRNA is encoded by the ssrA gene; the 2 termini fold to resemble tRNA(Ala) and it encodes a 'tag peptide', a short internal open reading frame. During trans-translation Ala-aminoacylated tmRNA acts like a tRNA, entering the A-site of stalled ribosomes, displacing the stalled mRNA. The ribosome then switches to translate the ORF on the tmRNA; the nascent peptide is terminated with the 'tag peptide' encoded by the tmRNA and targeted for degradation. The ribosome is freed to recommence translation, which seems to be the essential function of trans-translation. This chain is SsrA-binding protein, found in Ehrlichia ruminantium (strain Gardel).